The sequence spans 317 residues: MKVLWAALLVTFLAGCQAKVEQPVEPETEPELRQQAEWQSGQPWELALGRFWDYLRWVQTLSEQVQEELLSPQVTQELTTLMDETMKELKAYKSELEEQLSPVAEETRARLSKELQAAQARLGADMEDVRSRLVQYRSEVQAMLGQSTEELRARLASHLRKLRKRLLRDADDLQKRLAVYQAGAREGAERGVSAIRERLGPLVEQGRVRAATVGSLASQPLQERAQALGERLRARMEEMGSRTRDRLDEVKEQVAEVRAKLEEQAQQISLQAEAFQARLKSWFEPLVEDMQRQWAGLVEKVQAAVGASTAPVPSDNH.

The first 18 residues, 1 to 18 (MKVLWAALLVTFLAGCQA), serve as a signal peptide directing secretion. Tandem repeats lie at residues 80–101 (TLMDETMKELKAYKSELEEQLS), 102–123 (PVAEETRARLSKELQAAQARLG), 124–145 (ADMEDVRSRLVQYRSEVQAMLG), 146–167 (QSTEELRARLASHLRKLRKRLL), 168–189 (RDADDLQKRLAVYQAGAREGAE), 190–211 (RGVSAIRERLGPLVEQGRVRAA), 212–233 (TVGSLASQPLQERAQALGERLR), and 234–255 (ARMEEMGSRTRDRLDEVKEQVA). Residues 80–255 (TLMDETMKEL…RLDEVKEQVA (176 aa)) are 8 X 22 AA approximate tandem repeats. Position 143 is a methionine sulfoxide (Met-143). Ser-147 is modified (phosphoserine). The LDL and other lipoprotein receptors binding stretch occupies residues 158–168 (HLRKLRKRLLR). Residue 162 to 165 (LRKR) participates in heparin binding. The tract at residues 210-290 (AATVGSLASQ…SWFEPLVEDM (81 aa)) is lipid-binding and lipoprotein association. Position 229-236 (229-236 (GERLRARM)) interacts with heparin. Residues 266–317 (QQISLQAEAFQARLKSWFEPLVEDMQRQWAGLVEKVQAAVGASTAPVPSDNH) are homooligomerization. The tract at residues 278-290 (RLKSWFEPLVEDM) is specificity for association with VLDL.

Belongs to the apolipoprotein A1/A4/E family. As to quaternary structure, homotetramer. May interact with ABCA1; functionally associated with ABCA1 in the biogenesis of HDLs. May interact with APP/A4 amyloid-beta peptide; the interaction is extremely stable in vitro but its physiological significance is unclear. May interact with MAPT. May interact with MAP2. In the cerebrospinal fluid, interacts with secreted SORL1. Interacts with PMEL; this allows the loading of PMEL luminal fragment on ILVs to induce fibril nucleation. APOE exists as multiple glycosylated and sialylated glycoforms within cells and in plasma. The extent of glycosylation and sialylation are tissue and context specific. In terms of processing, glycated in plasma VLDL. Post-translationally, phosphorylated by FAM20C in the extracellular medium.

It localises to the secreted. The protein resides in the extracellular space. The protein localises to the extracellular matrix. It is found in the extracellular vesicle. Its subcellular location is the endosome. It localises to the multivesicular body. In terms of biological role, APOE is an apolipoprotein, a protein associating with lipid particles, that mainly functions in lipoprotein-mediated lipid transport between organs via the plasma and interstitial fluids. APOE is a core component of plasma lipoproteins and is involved in their production, conversion and clearance. Apolipoproteins are amphipathic molecules that interact both with lipids of the lipoprotein particle core and the aqueous environment of the plasma. As such, APOE associates with chylomicrons, chylomicron remnants, very low density lipoproteins (VLDL) and intermediate density lipoproteins (IDL) but shows a preferential binding to high-density lipoproteins (HDL). It also binds a wide range of cellular receptors including the LDL receptor/LDLR, the LDL receptor-related proteins LRP1, LRP2 and LRP8 and the very low-density lipoprotein receptor/VLDLR that mediate the cellular uptake of the APOE-containing lipoprotein particles. Finally, APOE also has a heparin-binding activity and binds heparan-sulfate proteoglycans on the surface of cells, a property that supports the capture and the receptor-mediated uptake of APOE-containing lipoproteins by cells. A main function of APOE is to mediate lipoprotein clearance through the uptake of chylomicrons, VLDLs, and HDLs by hepatocytes. APOE is also involved in the biosynthesis by the liver of VLDLs as well as their uptake by peripheral tissues ensuring the delivery of triglycerides and energy storage in muscle, heart and adipose tissues. By participating in the lipoprotein-mediated distribution of lipids among tissues, APOE plays a critical role in plasma and tissues lipid homeostasis. APOE is also involved in two steps of reverse cholesterol transport, the HDLs-mediated transport of cholesterol from peripheral tissues to the liver, and thereby plays an important role in cholesterol homeostasis. First, it is functionally associated with ABCA1 in the biogenesis of HDLs in tissues. Second, it is enriched in circulating HDLs and mediates their uptake by hepatocytes. APOE also plays an important role in lipid transport in the central nervous system, regulating neuron survival and sprouting. The chain is Apolipoprotein E (APOE) from Papio anubis (Olive baboon).